We begin with the raw amino-acid sequence, 575 residues long: MKNQTFSKALLATALSCALFNVHAASQAPVGAENGMVVTAQHIASKVGVEVLKSGGNAIDAAVAVGYALAVVYPAAGNIGGGGFMTIQLADGRKTFLDFREKAPLAATANMYLDKDGNVIKGASTTGYLAVGVPGTVSGMEYAREKYGTKTRQQLISPAITLADKGFVLEQGDVDMLWTSTKDFEKDRANSGAIFMNKGQPFQPGERLVQKDLARTLRLISAKGTDGFYKGEVADKLVASMKAGGGIITQADLDQYKTRELAPVECDYRGYHVVSAPPPSSGGVVICEIMNILEGYPMKELGYHSAQGVHYTIEAMRHAYVDRNSYLGDPDFVKNPLAHLLDKDYAAKIRAAINPQKAGISQEIKPGVPPHEGSNTTHYSIVDKDGNAVSVTYTLNDWFGAKVMANGTGVLLNDEMDDFTSKVGVPNMYGLIQGEANAIGPGRRPLSSMSPTIVTKDGKTVMVVGTPGGSRIITATLLTMLNMIDYGMNLQEAVDAPRFHQQWMPESTNIEAFALSPDTQKILESWGQKFAGPQPANHIAAILVGAPSLGGKPIGKNRFYGANDPRRNTGLALGY.

Positions 1-24 are cleaved as a signal peptide; that stretch reads MKNQTFSKALLATALSCALFNVHA. Arg100 serves as a coordination point for L-glutamate. The Nucleophile role is filled by Thr376. Residues Thr394, Asn396, Glu415, Asp418, 447-448, and 468-469 contribute to the L-glutamate site; these read SS and GG.

The protein belongs to the gamma-glutamyltransferase family. This enzyme consists of two polypeptide chains, which are synthesized in precursor form from a single polypeptide. Post-translationally, cleaved by autocatalysis into a large and a small subunit.

It localises to the periplasm. The enzyme catalyses an N-terminal (5-L-glutamyl)-[peptide] + an alpha-amino acid = 5-L-glutamyl amino acid + an N-terminal L-alpha-aminoacyl-[peptide]. It carries out the reaction glutathione + H2O = L-cysteinylglycine + L-glutamate. It catalyses the reaction an S-substituted glutathione + H2O = an S-substituted L-cysteinylglycine + L-glutamate. It functions in the pathway sulfur metabolism; glutathione metabolism. In Pseudomonas sp. (strain A14), this protein is Glutathione hydrolase proenzyme (ggt).